The primary structure comprises 464 residues: tRNA-2-methylthio-N(6)-dimethylallyladenosine synthase (464 aa).

The 117-residue stretch at 19–135 folds into the MTTase N-terminal domain; the sequence is GSYWITTFGC…LENLLGKVDL (117 aa). Residues C28, C64, C98, C170, C174, and C177 each coordinate [4Fe-4S] cluster. The 238-residue stretch at 156–393 folds into the Radical SAM core domain; sequence RESSICGWVN…NELVETTSKQ (238 aa). The region spanning 396–464 is the TRAM domain; the sequence is ERYLDSIESV…PFSLTGILCL (69 aa).

The protein belongs to the methylthiotransferase family. MiaB subfamily. Monomer. [4Fe-4S] cluster serves as cofactor.

The protein localises to the cytoplasm. The catalysed reaction is N(6)-dimethylallyladenosine(37) in tRNA + (sulfur carrier)-SH + AH2 + 2 S-adenosyl-L-methionine = 2-methylsulfanyl-N(6)-dimethylallyladenosine(37) in tRNA + (sulfur carrier)-H + 5'-deoxyadenosine + L-methionine + A + S-adenosyl-L-homocysteine + 2 H(+). Functionally, catalyzes the methylthiolation of N6-(dimethylallyl)adenosine (i(6)A), leading to the formation of 2-methylthio-N6-(dimethylallyl)adenosine (ms(2)i(6)A) at position 37 in tRNAs that read codons beginning with uridine. The sequence is that of tRNA-2-methylthio-N(6)-dimethylallyladenosine synthase from Prochlorococcus marinus (strain MIT 9215).